We begin with the raw amino-acid sequence, 226 residues long: Ribonuclease 3 (226 aa).

Residues isoleucine 6–asparagine 128 enclose the RNase III domain. Glutamate 41 provides a ligand contact to Mg(2+). Residue aspartate 45 is part of the active site. Aspartate 114 and glutamate 117 together coordinate Mg(2+). The active site involves glutamate 117. The 71-residue stretch at aspartate 155 to leucine 225 folds into the DRBM domain.

The protein belongs to the ribonuclease III family. As to quaternary structure, homodimer. The cofactor is Mg(2+).

It is found in the cytoplasm. The enzyme catalyses Endonucleolytic cleavage to 5'-phosphomonoester.. Its function is as follows. Digests double-stranded RNA. Involved in the processing of primary rRNA transcript to yield the immediate precursors to the large and small rRNAs (23S and 16S). Processes some mRNAs, and tRNAs when they are encoded in the rRNA operon. Processes pre-crRNA and tracrRNA of type II CRISPR loci if present in the organism. This is Ribonuclease 3 from Salmonella enteritidis PT4 (strain P125109).